Consider the following 363-residue polypeptide: Dihydroorotate dehydrogenase (quinone) (363 aa).

FMN-binding positions include 62–66 (AGYDK) and Thr86. Residue Lys66 participates in substrate binding. 111 to 115 (NRLGF) contributes to the substrate binding site. Residues Asn139 and Asn170 each contribute to the FMN site. Asn170 contributes to the substrate binding site. The active-site Nucleophile is the Ser173. Asn175 lines the substrate pocket. FMN contacts are provided by Lys215 and Ser243. 244-245 (NT) contacts substrate. FMN is bound by residues Gly266, Gly295, and 316–317 (YS).

It belongs to the dihydroorotate dehydrogenase family. Type 2 subfamily. In terms of assembly, monomer. The cofactor is FMN.

Its subcellular location is the cell membrane. It catalyses the reaction (S)-dihydroorotate + a quinone = orotate + a quinol. It participates in pyrimidine metabolism; UMP biosynthesis via de novo pathway; orotate from (S)-dihydroorotate (quinone route): step 1/1. In terms of biological role, catalyzes the conversion of dihydroorotate to orotate with quinone as electron acceptor. The sequence is that of Dihydroorotate dehydrogenase (quinone) from Agrobacterium fabrum (strain C58 / ATCC 33970) (Agrobacterium tumefaciens (strain C58)).